A 79-amino-acid polypeptide reads, in one-letter code: ATP synthase subunit c (79 aa).

The next 2 membrane-spanning stretches (helical) occupy residues 7 to 27 (VSGM…GAGI) and 56 to 76 (IGSA…LFLI).

Belongs to the ATPase C chain family. In terms of assembly, F-type ATPases have 2 components, F(1) - the catalytic core - and F(0) - the membrane proton channel. F(1) has five subunits: alpha(3), beta(3), gamma(1), delta(1), epsilon(1). F(0) has three main subunits: a(1), b(2) and c(10-14). The alpha and beta chains form an alternating ring which encloses part of the gamma chain. F(1) is attached to F(0) by a central stalk formed by the gamma and epsilon chains, while a peripheral stalk is formed by the delta and b chains.

It is found in the cell membrane. In terms of biological role, f(1)F(0) ATP synthase produces ATP from ADP in the presence of a proton or sodium gradient. F-type ATPases consist of two structural domains, F(1) containing the extramembraneous catalytic core and F(0) containing the membrane proton channel, linked together by a central stalk and a peripheral stalk. During catalysis, ATP synthesis in the catalytic domain of F(1) is coupled via a rotary mechanism of the central stalk subunits to proton translocation. Functionally, key component of the F(0) channel; it plays a direct role in translocation across the membrane. A homomeric c-ring of between 10-14 subunits forms the central stalk rotor element with the F(1) delta and epsilon subunits. This chain is ATP synthase subunit c, found in Clostridium botulinum (strain Hall / ATCC 3502 / NCTC 13319 / Type A).